A 186-amino-acid chain; its full sequence is MKIIAFVGMPASGKSEAARIAAEMGIPVINMGDVIRKEVSRRGLEPNDSNTGMVATQLRKCEGMDAVAVRCISQIRDAGSDLIVVDGVRGVAEVECFRRELGEGFILISIYAPIEIRFSRVQKRGRSDDMNSIEGLRNRDERELSWGMGEAIEASNIEIENNSTLEIFKKDVVEVLSNYLRQTPSE.

Residue 8-15 coordinates ATP; sequence GMPASGKS.

Belongs to the UPF0200 family.

This Methanosarcina barkeri (strain Fusaro / DSM 804) protein is UPF0200 protein Mbar_A0975.